The chain runs to 440 residues: NADH-quinone oxidoreductase subunit D (440 aa).

The protein belongs to the complex I 49 kDa subunit family. In terms of assembly, NDH-1 is composed of 14 different subunits. Subunits NuoB, C, D, E, F, and G constitute the peripheral sector of the complex.

It localises to the cell membrane. The enzyme catalyses a quinone + NADH + 5 H(+)(in) = a quinol + NAD(+) + 4 H(+)(out). NDH-1 shuttles electrons from NADH, via FMN and iron-sulfur (Fe-S) centers, to quinones in the respiratory chain. The immediate electron acceptor for the enzyme in this species is believed to be a menaquinone. Couples the redox reaction to proton translocation (for every two electrons transferred, four hydrogen ions are translocated across the cytoplasmic membrane), and thus conserves the redox energy in a proton gradient. The polypeptide is NADH-quinone oxidoreductase subunit D (Acidothermus cellulolyticus (strain ATCC 43068 / DSM 8971 / 11B)).